The following is a 1104-amino-acid chain: Nitrite reductase [NAD(P)H] (1104 aa).

44-79 lines the FAD pocket; the sequence is QKIVVVGLGMVAVAFIEKLVKLDSERRKYDIVVIGE. 146-176 contributes to the NAD(+) binding site; it reads YDILVLATGSDAVLPTSTPGHDAKGIFVYRT. Residues 396 to 419 are disordered; it reads KFLPGQRPSAESIGAADPNREEEP. Cysteine 500, cysteine 502, cysteine 535, and cysteine 538 together coordinate [2Fe-2S] cluster. Residues cysteine 720, cysteine 726, cysteine 760, and cysteine 764 each contribute to the [4Fe-4S] cluster site. Cysteine 764 is a siroheme binding site. In terms of domain architecture, Rieske spans 932 to 1040; that stretch reads WQPVIKADYF…VEEREDGWIY (109 aa). 4 residues coordinate [2Fe-2S] cluster: cysteine 976, histidine 978, cysteine 1001, and histidine 1004. Residues 1081–1104 form a disordered region; sequence GKRAGAKGIEGSKPTRSPSNTIDW. Over residues 1094-1104 the composition is skewed to polar residues; it reads PTRSPSNTIDW.

The protein belongs to the nitrite and sulfite reductase 4Fe-4S domain family. In terms of assembly, homodimer. It depends on siroheme as a cofactor. Requires [4Fe-4S] cluster as cofactor. FAD serves as cofactor. [2Fe-2S] cluster is required as a cofactor.

It carries out the reaction NH4(+) + 3 NADP(+) + 2 H2O = nitrite + 3 NADPH + 5 H(+). It catalyses the reaction NH4(+) + 3 NAD(+) + 2 H2O = nitrite + 3 NADH + 5 H(+). The protein operates within nitrogen metabolism; nitrate reduction (assimilation). The sequence is that of Nitrite reductase [NAD(P)H] (niiA) from Emericella nidulans (strain FGSC A4 / ATCC 38163 / CBS 112.46 / NRRL 194 / M139) (Aspergillus nidulans).